A 375-amino-acid chain; its full sequence is MQKLQISVYIYLFMLIVAGPVDLNEKSEQKENVEKEGLCNACLWRENTTSSRLEAIKIQILSKLRLETAPNISKDAIRQLLPKAPPLLELIDQFDVQGDASSDGSLEDDDYHARTETVITMPTESDLLTQVEGKPKCCFFKFSSKIQYNKLVKAQLWIYLRPVKTPTTVFAQILRLIKPMKDGTRYTGIRSLKLDMNPGTGIWQSIDVKTVLQNWLKQPESNLGIEIKALDENGRDLAVTFPEPGEDGLTPFLEVKVTDTPKRSRRDFGLDCDEHSTESRCCRYPLTVDFEAFGWDWIIAPKRYKANYCSGECEFVFLQKYPHTHLVHQANPRGSAGPCCTPTKMSPINMLYFNGEGQIIYGKIPAMVVDRCGCS.

The first 18 residues, 1-18, serve as a signal peptide directing secretion; the sequence is MQKLQISVYIYLFMLIVA. Positions 19–266 are excised as a propeptide; sequence GPVDLNEKSE…VTDTPKRSRR (248 aa). N-linked (GlcNAc...) asparagine glycosylation is found at Asn47 and Asn71. 4 disulfides stabilise this stretch: Cys272/Cys282, Cys281/Cys340, Cys309/Cys372, and Cys313/Cys374.

This sequence belongs to the TGF-beta family. As to quaternary structure, homodimer; disulfide-linked. Interacts with WFIKKN2, leading to inhibit its activity. Interacts with FSTL3. In terms of processing, synthesized as large precursor molecule that undergoes proteolytic cleavage to generate an N-terminal propeptide and a disulfide linked C-terminal dimer, which is the biologically active molecule. The circulating form consists of a latent complex of the C-terminal dimer and other proteins, including its propeptide, which maintain the C-terminal dimer in a latent, inactive state. Ligand activation requires additional cleavage of the prodomain by a tolloid-like metalloproteinase.

The protein localises to the secreted. In terms of biological role, acts specifically as a negative regulator of skeletal muscle growth. The polypeptide is Growth/differentiation factor 8 (MSTN) (Taurotragus derbianus (Giant eland)).